A 329-amino-acid chain; its full sequence is tRNA(Ile)-lysidine synthase, chloroplastic (329 aa).

32–37 (SGGQDS) is a binding site for ATP.

It belongs to the tRNA(Ile)-lysidine synthase family.

Its subcellular location is the plastid. The protein resides in the chloroplast. The enzyme catalyses cytidine(34) in tRNA(Ile2) + L-lysine + ATP = lysidine(34) in tRNA(Ile2) + AMP + diphosphate + H(+). Its function is as follows. Ligates lysine onto the cytidine present at position 34 of the AUA codon-specific tRNA(Ile) that contains the anticodon CAU, in an ATP-dependent manner. Cytidine is converted to lysidine, thus changing the amino acid specificity of the tRNA from methionine to isoleucine. The protein is tRNA(Ile)-lysidine synthase, chloroplastic of Pyropia yezoensis (Susabi-nori).